The following is a 434-amino-acid chain: UDP-N-acetylenolpyruvoylglucosamine reductase (434 aa).

Positions 51-238 (IGAAPAGVVE…TAVEFQLTTD (188 aa)) constitute an FAD-binding PCMH-type domain. The active site involves R216. The active-site Proton donor is the S299. Residue E425 is part of the active site.

Belongs to the MurB family. The cofactor is FAD.

It localises to the cytoplasm. It catalyses the reaction UDP-N-acetyl-alpha-D-muramate + NADP(+) = UDP-N-acetyl-3-O-(1-carboxyvinyl)-alpha-D-glucosamine + NADPH + H(+). It functions in the pathway cell wall biogenesis; peptidoglycan biosynthesis. Its function is as follows. Cell wall formation. In Corynebacterium jeikeium (strain K411), this protein is UDP-N-acetylenolpyruvoylglucosamine reductase.